We begin with the raw amino-acid sequence, 125 residues long: Small ribosomal subunit protein eS8 (125 aa).

It belongs to the eukaryotic ribosomal protein eS8 family. As to quaternary structure, part of the 30S ribosomal subunit.

In Methanocella arvoryzae (strain DSM 22066 / NBRC 105507 / MRE50), this protein is Small ribosomal subunit protein eS8.